The following is a 299-amino-acid chain: N-acetylmuramic acid 6-phosphate etherase (299 aa).

The region spanning Thr-54–Lys-217 is the SIS domain. The active-site Proton donor is Glu-82. The active site involves Glu-113.

This sequence belongs to the GCKR-like family. MurNAc-6-P etherase subfamily. In terms of assembly, homodimer.

The catalysed reaction is N-acetyl-D-muramate 6-phosphate + H2O = N-acetyl-D-glucosamine 6-phosphate + (R)-lactate. Its pathway is amino-sugar metabolism; N-acetylmuramate degradation. In terms of biological role, specifically catalyzes the cleavage of the D-lactyl ether substituent of MurNAc 6-phosphate, producing GlcNAc 6-phosphate and D-lactate. In Staphylococcus aureus (strain USA300), this protein is N-acetylmuramic acid 6-phosphate etherase.